Reading from the N-terminus, the 518-residue chain is DNA-binding protein Ikaros (518 aa).

The disordered stretch occupies residues 1–51 (METDEAQDMSQVSGKESPPISDVPDDADEPMPVPEDLSTTTGGQQSVKNER). Residues 37 to 47 (LSTTTGGQQSV) are compositionally biased toward polar residues. 4 C2H2-type zinc fingers span residues 117-139 (LKCD…NRSH), 145-167 (FQCN…IKLH), 173-195 (FKCH…LRTH), and 201-224 (HKCG…ERCH). The interval 381–405 (SVSSERDASPSNSCQDSTDTESNNE) is disordered. C2H2-type zinc fingers lie at residues 461–483 (YKCE…MGCH) and 489–513 (FECN…RGEH).

The protein belongs to the Ikaros C2H2-type zinc-finger protein family. Expressed in embryonic hematopoietic organs such as the bursa of Fabricius, thymus and spleen. In the adult, expressed in spleen, thymus, bursa and peripheral blood leukocytes.

The protein resides in the nucleus. Functionally, binds and activates the enhancer (delta-A element) of the CD3-delta gene. Functions in the specification and the maturation of the T-lymphocyte. Also interacts with a critical control element in the TDT (terminal deoxynucleotidyltransferase) promoter as well as with the promoters for other genes expressed during early stages of B- and T-cell development. Function is isoform-specific and is modulated by dominant-negative inactive isoforms. The sequence is that of DNA-binding protein Ikaros (IKZF1) from Gallus gallus (Chicken).